The chain runs to 471 residues: U1 small nuclear ribonucleoprotein 70 kDa (471 aa).

The disordered stretch occupies residues 48 to 78 (FEDPRDAPPPTRAETREERMERKRREKIERR). Residues 60-78 (AETREERMERKRREKIERR) show a composition bias toward basic and acidic residues. The segment at 92-202 (HNDQNAQGDA…GGGLGGTRRG (111 aa)) is required for interaction with U1 RNA. Residues 103–184 (KTLFVARVNY…LVDVERGRTV (82 aa)) form the RRM domain. A disordered region spans residues 187–471 (WRPRRLGGGL…NGYMMEPPME (285 aa)). The segment covering 192–201 (LGGGLGGTRR) has biased composition (gly residues). A compositionally biased stretch (basic and acidic residues) spans 207–245 (NIRHSGRDDTSRYDERDRDRERERDRRERSRERDKERER). Residues 246 to 259 (RRSRSRERRRRSRS) show a composition bias toward basic residues. A compositionally biased stretch (basic and acidic residues) spans 260 to 293 (REKEERKRSRERSRDKDKDKDKDKDKEKDKDKDR). Residues 294–303 (DRKRRSRSRE) are compositionally biased toward basic residues. 2 stretches are compositionally biased toward basic and acidic residues: residues 304 to 321 (RKRERDRDREKKEDRVEG) and 344 to 428 (IELK…ERVP).

In terms of assembly, component of the U1 snRNP. The U1 snRNP is composed of the U1 snRNA and the 7 core Sm proteins snrpb, snrpd1, snrpd2, snrpd3, snrpe, snrpf and snrpg that assemble in a heptameric protein ring on the Sm site of the small nuclear RNA to form the core snRNP, and at least three U1 snRNP-specific proteins snrnp70/U1-70K, snrpa/U1-A and snrpc/U1-C.

The protein localises to the nucleus speckle. It is found in the nucleus. The protein resides in the nucleoplasm. In terms of biological role, component of the spliceosomal U1 snRNP, which is essential for recognition of the pre-mRNA 5' splice-site and the subsequent assembly of the spliceosome. snrnp70 binds to the loop I region of U1-snRNA. The polypeptide is U1 small nuclear ribonucleoprotein 70 kDa (snrnp70) (Xenopus tropicalis (Western clawed frog)).